Here is a 109-residue protein sequence, read N- to C-terminus: Flagellar hook-basal body complex protein FliE (109 aa).

It belongs to the FliE family.

It is found in the bacterial flagellum basal body. This chain is Flagellar hook-basal body complex protein FliE, found in Pseudomonas fluorescens (strain SBW25).